We begin with the raw amino-acid sequence, 300 residues long: PTB domain-containing engulfment adapter protein 1 (300 aa).

In terms of domain architecture, PID spans 21 to 176 (AKHFIPYNAK…GGLQKRIQDL (156 aa)). Positions 160–199 (VETRKQIGGLQKRIQDLETENVELKKQLQVLEEQLMIAQV) form a coiled coil.

This sequence belongs to the ced-6 family.

The protein resides in the cytoplasm. May function as an adapter protein. Required for efficient phagocytosis of apoptotic cells. May play a role in the internalization and endosomal trafficking of various lrp1 ligands. In Danio rerio (Zebrafish), this protein is PTB domain-containing engulfment adapter protein 1 (gulp1).